The sequence spans 142 residues: MVLSAADKGNVKAAWGKVGGHAAEYGAEALERMFLSFPTTKTYFPHFDLSHGSAQVKGHGAKVAAALTKAVEHLDDLPGALSELSDLHAHKLRVDPVNFKLLSHSLLVTLASHLPSDFTPAVHASLDKFLANVSTVLTSKYR.

The 141-residue stretch at 2-142 (VLSAADKGNV…VSTVLTSKYR (141 aa)) folds into the Globin domain. Position 4 is a phosphoserine (S4). An N6-succinyllysine mark is found at K8 and K12. K17 carries the post-translational modification N6-acetyllysine; alternate. At K17 the chain carries N6-succinyllysine; alternate. The residue at position 25 (Y25) is a Phosphotyrosine. The residue at position 36 (S36) is a Phosphoserine. K41 bears the N6-succinyllysine mark. Phosphoserine is present on S50. An O2-binding site is contributed by H59. H88 serves as a coordination point for heme b. S103 is subject to Phosphoserine. A Phosphothreonine modification is found at T109. S125 is modified (phosphoserine). T135 and T138 each carry phosphothreonine. S139 is subject to Phosphoserine.

It belongs to the globin family. Heterotetramer of two alpha chains and two beta chains. In terms of tissue distribution, red blood cells.

Involved in oxygen transport from the lung to the various peripheral tissues. Its function is as follows. Hemopressin acts as an antagonist peptide of the cannabinoid receptor CNR1. Hemopressin-binding efficiently blocks cannabinoid receptor CNR1 and subsequent signaling. In Bos taurus (Bovine), this protein is Hemoglobin subunit alpha (HBA).